The chain runs to 41 residues: Photosystem I reaction center subunit IX (41 aa).

A helical transmembrane segment spans residues 7 to 27; it reads YLSTAPVVAFAWITITAGLLI.

Belongs to the PsaJ family.

It localises to the plastid. The protein localises to the chloroplast thylakoid membrane. Its function is as follows. May help in the organization of the PsaE and PsaF subunits. The protein is Photosystem I reaction center subunit IX of Oedogonium cardiacum (Filamentous green alga).